We begin with the raw amino-acid sequence, 243 residues long: Small ribosomal subunit protein eS4 (243 aa).

The S4 RNA-binding domain occupies 43-105 (IPLIYIVRDY…TGEHYRVLPN (63 aa)).

This sequence belongs to the eukaryotic ribosomal protein eS4 family. As to quaternary structure, part of the 30S ribosomal subunit.

The protein is Small ribosomal subunit protein eS4 of Thermococcus kodakarensis (strain ATCC BAA-918 / JCM 12380 / KOD1) (Pyrococcus kodakaraensis (strain KOD1)).